The chain runs to 143 residues: Nucleoside diphosphate kinase (143 aa).

ATP is bound by residues K11, F59, R87, T93, R104, and N114. H117 serves as the catalytic Pros-phosphohistidine intermediate.

Belongs to the NDK family. In terms of assembly, homotetramer. Mg(2+) serves as cofactor.

It is found in the cytoplasm. The catalysed reaction is a 2'-deoxyribonucleoside 5'-diphosphate + ATP = a 2'-deoxyribonucleoside 5'-triphosphate + ADP. The enzyme catalyses a ribonucleoside 5'-diphosphate + ATP = a ribonucleoside 5'-triphosphate + ADP. In terms of biological role, major role in the synthesis of nucleoside triphosphates other than ATP. The ATP gamma phosphate is transferred to the NDP beta phosphate via a ping-pong mechanism, using a phosphorylated active-site intermediate. The polypeptide is Nucleoside diphosphate kinase (Shewanella loihica (strain ATCC BAA-1088 / PV-4)).